The primary structure comprises 222 residues: Putative adhesin RP828 (222 aa).

The signal sequence occupies residues 1 to 22 (MKKLLLIATASATILSSSVSFA).

Functionally, adheres to biotinylated epithelial (Vero cell) proteins. The protein is Putative adhesin RP828 of Rickettsia prowazekii (strain Madrid E).